Consider the following 382-residue polypeptide: MTSLRKTHPLLKIANSALIDLPTPSNISAWWNFGSLLGLCLASQIVTGLFLAMHYTSDISTAFSSVTHICRDVNYGWLVRNMHANGASFFFICLYTHIGRGLYYGSYLYKETWTVGVILLLLTMMTAFVGYVLPWGQMSFWGATVITNLLSAIPYAGQTLVQWIWGGFSVDNATLTRFFAFHFLLPFVIAAFTAIHLLFLHETGSNNPTGLNSDADKIPFHPYFSLKDLLGFTILILTLTSVALLTPNLLGDPDNFTPANPLVTPPHIKPEWYFLFAYAILRSIPNKLGGVLALLASVLILATVPFLQTSKQQALTFRPLTQLVFWTLIANIAILTWIGGMPVEYPFVSIGQLASLAYFSIFLIIIPTTGWLEDKTLKWSRT.

Helical transmembrane passes span 33-53 (FGSLLGLCLASQIVTGLFLAM), 77-98 (WLVRNMHANGASFFFICLYTHI), 113-133 (WTVGVILLLLTMMTAFVGYVL), and 178-198 (FFAFHFLLPFVIAAFTAIHLL). Heme b-binding residues include histidine 83 and histidine 97. Heme b is bound by residues histidine 182 and histidine 196. Histidine 201 lines the a ubiquinone pocket. Helical transmembrane passes span 226–246 (LKDLLGFTILILTLTSVALLT), 288–308 (LGGVLALLASVLILATVPFLQ), 320–340 (LTQLVFWTLIANIAILTWIGG), and 347–367 (FVSIGQLASLAYFSIFLIIIP).

This sequence belongs to the cytochrome b family. In terms of assembly, the cytochrome bc1 complex contains 3 respiratory subunits (MT-CYB, CYC1 and UQCRFS1), 2 core proteins (UQCRC1 and UQCRC2) and probably 6 low-molecular weight proteins. It depends on heme b as a cofactor.

The protein resides in the mitochondrion inner membrane. Its function is as follows. Component of the ubiquinol-cytochrome c reductase complex (complex III or cytochrome b-c1 complex) that is part of the mitochondrial respiratory chain. The b-c1 complex mediates electron transfer from ubiquinol to cytochrome c. Contributes to the generation of a proton gradient across the mitochondrial membrane that is then used for ATP synthesis. The polypeptide is Cytochrome b (mt-cyb) (Sigmops gracilis (Slender fangjaw)).